We begin with the raw amino-acid sequence, 368 residues long: tRNA-cytidine(32) 2-sulfurtransferase (368 aa).

A PP-loop motif motif is present at residues 95–100 (SGGKDS). 3 residues coordinate [4Fe-4S] cluster: cysteine 170, cysteine 173, and cysteine 261.

The protein belongs to the TtcA family. As to quaternary structure, homodimer. It depends on Mg(2+) as a cofactor. [4Fe-4S] cluster serves as cofactor.

The protein localises to the cytoplasm. The catalysed reaction is cytidine(32) in tRNA + S-sulfanyl-L-cysteinyl-[cysteine desulfurase] + AH2 + ATP = 2-thiocytidine(32) in tRNA + L-cysteinyl-[cysteine desulfurase] + A + AMP + diphosphate + H(+). It participates in tRNA modification. Its function is as follows. Catalyzes the ATP-dependent 2-thiolation of cytidine in position 32 of tRNA, to form 2-thiocytidine (s(2)C32). The sulfur atoms are provided by the cysteine/cysteine desulfurase (IscS) system. This is tRNA-cytidine(32) 2-sulfurtransferase from Psychrobacter sp. (strain PRwf-1).